Here is a 144-residue protein sequence, read N- to C-terminus: Grifin (144 aa).

One can recognise a Galectin domain in the interval 5 to 133 (FEAFCAGGLA…EHRLAQVELA (129 aa)). At S138 the chain carries Phosphoserine.

As to quaternary structure, homodimer.

The chain is Grifin (Grifin) from Mus musculus (Mouse).